The sequence spans 211 residues: Protein GrpE (211 aa).

Residues 1–10 are compositionally biased toward basic and acidic residues; it reads MTDDTKKPGP. Disordered regions lie at residues 1–37 and 187–211; these read MTDD…PDPV and AKGG…EKDA. Positions 27–36 are enriched in acidic residues; sequence EQAETAEPDP. Residues 201–211 are compositionally biased toward polar residues; the sequence is PGTSSLNEKDA.

It belongs to the GrpE family. As to quaternary structure, homodimer.

It is found in the cytoplasm. Its function is as follows. Participates actively in the response to hyperosmotic and heat shock by preventing the aggregation of stress-denatured proteins, in association with DnaK and GrpE. It is the nucleotide exchange factor for DnaK and may function as a thermosensor. Unfolded proteins bind initially to DnaJ; upon interaction with the DnaJ-bound protein, DnaK hydrolyzes its bound ATP, resulting in the formation of a stable complex. GrpE releases ADP from DnaK; ATP binding to DnaK triggers the release of the substrate protein, thus completing the reaction cycle. Several rounds of ATP-dependent interactions between DnaJ, DnaK and GrpE are required for fully efficient folding. This is Protein GrpE from Agrobacterium fabrum (strain C58 / ATCC 33970) (Agrobacterium tumefaciens (strain C58)).